The chain runs to 294 residues: 33 kDa chaperonin (294 aa).

Disulfide bonds link Cys-230–Cys-232 and Cys-263–Cys-266.

It belongs to the HSP33 family. Under oxidizing conditions two disulfide bonds are formed involving the reactive cysteines. Under reducing conditions zinc is bound to the reactive cysteines and the protein is inactive.

It is found in the cytoplasm. Functionally, redox regulated molecular chaperone. Protects both thermally unfolding and oxidatively damaged proteins from irreversible aggregation. Plays an important role in the bacterial defense system toward oxidative stress. The protein is 33 kDa chaperonin of Chromobacterium violaceum (strain ATCC 12472 / DSM 30191 / JCM 1249 / CCUG 213 / NBRC 12614 / NCIMB 9131 / NCTC 9757 / MK).